Here is a 335-residue protein sequence, read N- to C-terminus: Mitochondrial fission regulator 1 (335 aa).

The transit peptide at Met1–Gln48 directs the protein to the mitochondrion. Residues Arg134 to Gln170 adopt a coiled-coil conformation. The segment at Ala182–Asn309 is necessary and sufficient to promote mitochondrial fission. The interval Arg219–Ile240 is disordered.

It belongs to the MTFR1 family. Widely expressed in embryonic tissues with higher expression in cartilage and hypertrophic chondrocytes. Specifically expressed in hypertrophic chondrocytes (at protein level).

It localises to the mitochondrion. Functionally, may play a role in mitochondrial aerobic respiration. May also regulate mitochondrial organization and fission. This is Mitochondrial fission regulator 1 (MTFR1) from Gallus gallus (Chicken).